The sequence spans 106 residues: RxLR effector protein PSR1 (106 aa).

The signal sequence occupies residues 1–20; it reads MRLTYVLLVAVTTLLVSCDA. A RxLR-dEER motif is present at residues 33–46; it reads RLLRFVEAADEEER. Residues 50 to 106 are WY domain; that stretch reads FSPEKLRKMLGDETYRLKKFGKWDSDGHTFDGLKHYLLLSDSSMVKLRNMYKAWLEQ. A Bipartite nuclear localization signal (NLS) motif is present at residues 56–69; the sequence is RKMLGDETYRLKKF.

It belongs to the RxLR effector family. As to quaternary structure, interacts with host PINP1.

Its subcellular location is the secreted. It is found in the host nucleus. Functionally, secreted effector that possesses RNA silencing suppression activity by inhibiting the biogenesis of small RNAs in the host plant to promote enhanced susceptibility of host to the pathogen during infection. Interferes with secondary siRNA production by associating with host nuclear protein PINP1 that acts as a regulator of the accumulation of both microRNAs and endogenous small interfering RNAs. The protein is RxLR effector protein PSR1 of Phytophthora sojae (Soybean stem and root rot agent).